The following is a 319-amino-acid chain: Serine acetyltransferase, plasmid (319 aa).

This sequence belongs to the transferase hexapeptide repeat family.

The protein localises to the cytoplasm. It carries out the reaction L-serine + acetyl-CoA = O-acetyl-L-serine + CoA. It participates in amino-acid biosynthesis; L-cysteine biosynthesis; L-cysteine from L-serine: step 1/2. The chain is Serine acetyltransferase, plasmid (srpH) from Synechococcus elongatus (strain ATCC 33912 / PCC 7942 / FACHB-805) (Anacystis nidulans R2).